The following is a 746-amino-acid chain: NAD(P)H-quinone oxidoreductase subunit 5, chloroplastic (746 aa).

16 helical membrane-spanning segments follow: residues 9–29, 39–59, 89–109, 125–145, 147–167, 185–205, 221–241, 258–278, 280–300, 327–347, 354–374, 396–416, 425–445, 547–567, 608–628, and 723–743; these read WIIP…LLLF, IWTF…LYLS, IDPL…LVLI, FAYM…SNLI, VYFF…FWFT, GDFG…SFEF, VNFF…IAKS, TPIS…FLVA, LLPL…IGII, LGYM…FHLI, ALLF…VGYS, TAFL…CFWS, LLFS…TAFY, ILFP…IGIP, FSVS…KPFY, and YLFF…FFYF.

Belongs to the complex I subunit 5 family. In terms of assembly, NDH is composed of at least 16 different subunits, 5 of which are encoded in the nucleus.

The protein resides in the plastid. Its subcellular location is the chloroplast thylakoid membrane. The catalysed reaction is a plastoquinone + NADH + (n+1) H(+)(in) = a plastoquinol + NAD(+) + n H(+)(out). The enzyme catalyses a plastoquinone + NADPH + (n+1) H(+)(in) = a plastoquinol + NADP(+) + n H(+)(out). In terms of biological role, NDH shuttles electrons from NAD(P)H:plastoquinone, via FMN and iron-sulfur (Fe-S) centers, to quinones in the photosynthetic chain and possibly in a chloroplast respiratory chain. The immediate electron acceptor for the enzyme in this species is believed to be plastoquinone. Couples the redox reaction to proton translocation, and thus conserves the redox energy in a proton gradient. This Capsella bursa-pastoris (Shepherd's purse) protein is NAD(P)H-quinone oxidoreductase subunit 5, chloroplastic (ndhF).